We begin with the raw amino-acid sequence, 941 residues long: MIGALARKIFGSANDRRVKGYQARVDAINAMEPEIAALSDEALKARTAEFKQQLASGKTLDDILVPAFATVREAAKRTLGQRHFDVQLIGGMVLHEGDIAEMKTGEGKTLVATLAVYLNALTGRGVHVVTVNDYLAKRDAEWMSQVYSFLGLTTGIIIHGLDDPERQAAYACDITYGTNNEFGFDYLRDNMKYRLEDMVQRDHVFAIVDEVDSILIDEARTPLIISGPLDDRSEFYNTIDTFIPKLEPADYEIDEKQRTVTLTEGGMEKLEQMLREAGLLKGESLYDIENVSVVHHVNQALRAHRLFTRDKDYIVRDGEVVIIDEFTGRMMPGRRYSEGLHQALEAKEHQPVQPENQTLASITFQNYFRMYEKLGGMTGTAATEADEFFDIYKLEVLEIPTNLPIARLDEDDEVYRSSREKYAAILAEIERANGRMQPVLVGTASIEKSEVLADFLKEHGYKQIDFANPKSMAKLYDAARAGKPSKLFAVLNARFHEQEAYIVAEAGVPGAITIATNMAGRGTDIKLGGSLEMRAAAATAGIEDEAEKQKIVEGIKADIEKFKEMVLAAEETVELEPGKPGGKTIKKPGGLYIIGSERHESRRIDNQLRGRAGRQGDPGRTKFYLSLDDDLMRIFGSDRLEGMLQRLGLKEGEAIIHPWINKALEKAQQKVEARNFDIRKNLLKYDDVQNDQRKVIFEQRIDLMRDQNVSETVTDMRHTLIEGLVAKHIPEHAYPEQWDVSGLREELQRVIGLDLPVEDWAKEEGIADEEMLSRLQQRVDEHMAAKSAQWGPEVMRYVEKTILLQTLDHLWREHLIMLDHLRQVIGLRGYGQRDPLQEYKSEAFELFESLISHMREAVTAQLMRVEIVPPDEQPPMPAMEAHKLDPNTGEDQVAQAQSGLAPVAPAKRDPANPATWGKVGRNEDCPCGSGRKFKHCHGRYA.

ATP-binding positions include Gln-87, 105-109 (GEGKT), and Asp-524. The interval 871–919 (DEQPPMPAMEAHKLDPNTGEDQVAQAQSGLAPVAPAKRDPANPATWGKV) is disordered. Cys-925, Cys-927, Cys-936, and His-937 together coordinate Zn(2+).

This sequence belongs to the SecA family. As to quaternary structure, monomer and homodimer. Part of the essential Sec protein translocation apparatus which comprises SecA, SecYEG and auxiliary proteins SecDF-YajC and YidC. It depends on Zn(2+) as a cofactor.

It is found in the cell inner membrane. It localises to the cytoplasm. It catalyses the reaction ATP + H2O + cellular proteinSide 1 = ADP + phosphate + cellular proteinSide 2.. In terms of biological role, part of the Sec protein translocase complex. Interacts with the SecYEG preprotein conducting channel. Has a central role in coupling the hydrolysis of ATP to the transfer of proteins into and across the cell membrane, serving both as a receptor for the preprotein-SecB complex and as an ATP-driven molecular motor driving the stepwise translocation of polypeptide chains across the membrane. The protein is Protein translocase subunit SecA of Afipia carboxidovorans (strain ATCC 49405 / DSM 1227 / KCTC 32145 / OM5) (Oligotropha carboxidovorans).